The following is a 1602-amino-acid chain: Calmodulin-regulated spectrin-associated protein 1 (1602 aa).

Residues 216–331 enclose the Calponin-homology (CH) domain; it reads ESPAHQKVRY…FIAELFWWFE (116 aa). Phosphoserine is present on residues serine 217, serine 371, serine 375, serine 416, and serine 431. A disordered region spans residues 426-471; sequence QKQQKSIQGEDIPDQRHRSNSLTRVDGQPRGAAIAWPEKKTRPASQ. The residue at position 512 (threonine 512) is a Phosphothreonine. Phosphoserine occurs at positions 563, 575, and 589. Positions 603–620 are enriched in basic and acidic residues; the sequence is AKEKQVITKEDERGEGRP. The interval 603 to 637 is disordered; it reads AKEKQVITKEDERGEGRPRSIVSRRPSEGPQPLVR. Serine 629, serine 722, serine 728, serine 738, and serine 740 each carry phosphoserine. Basic and acidic residues predominate over residues 772 to 789; that stretch reads KLQEDMKVKEHEDKDDAS. Disordered stretches follow at residues 772-808 and 825-870; these read KLQEDMKVKEHEDKDDASGRSSPCLSTASQMSSVSMA and LNSC…GKDP. 2 stretches are compositionally biased toward low complexity: residues 797–808 and 830–841; these read STASQMSSVSMA and TKSSTSSSQKTT. Basic and acidic residues predominate over residues 857 to 869; the sequence is QKREQSPSQHGKD. Residues 871–892 form a sufficient for interaction with SPTBN1 region; it reads ASLLASELVQLHMQLEEKRRAI. 2 coiled-coil regions span residues 873–909 and 1016–1048; these read LLASELVQLHMQLEEKRRAIEAQKKKMEALSARQRLK and DVNECDLSIEKLNETISTLQQAILKISQQQEQL. Residues 903–922 are sufficient for interaction with calmodulin; sequence SARQRLKLGKAAFLHVVKKG. Disordered stretches follow at residues 1075–1165, 1206–1226, and 1301–1448; these read FVEP…GKCL, KEVGSSSSDVSGKESVPVEEP, and ARVR…DWET. A Phosphoserine modification is found at serine 1080. Residues 1103–1114 are compositionally biased toward basic and acidic residues; sequence RPAELKVPKDRP. Positions 1115–1127 are enriched in polar residues; it reads QGSSRSKTPTPSV. A compositionally biased stretch (low complexity) spans 1206-1220; sequence KEVGSSSSDVSGKES. Residues 1291 to 1343 are a coiled coil; sequence LLKQQRKAEEARVRKQQLEAEVELKRDEARRKAEEDRVRKEEEKARRELIKQE. Positions 1301-1346 are enriched in basic and acidic residues; sequence ARVRKQQLEAEVELKRDEARRKAEEDRVRKEEEKARRELIKQEYLR. Residues 1361 to 1372 are compositionally biased toward basic residues; it reads PKSKPKKPRPKS. A compositionally biased stretch (polar residues) spans 1380–1392; that stretch reads SDSGTKCSSTPDN. Positions 1393–1410 are enriched in low complexity; sequence LSRTQSGSSLSLASAATT. 2 positions are modified to phosphoserine: serine 1398 and serine 1427. The 135-residue stretch at 1463–1597 folds into the CKK domain; sequence GPKLFKEPSS…QPKRPAVPKK (135 aa). Residue tyrosine 1537 is modified to Phosphotyrosine.

The protein belongs to the CAMSAP1 family. Interacts with spectrin via SPTBN1; the interaction is direct. Interacts with calmodulin; calcium-dependent it prevents interaction with spectrin.

It is found in the cytoplasm. It localises to the cytoskeleton. Its function is as follows. Key microtubule-organizing protein that specifically binds the minus-end of non-centrosomal microtubules and regulates their dynamics and organization. Specifically recognizes growing microtubule minus-ends and stabilizes microtubules. Acts on free microtubule minus-ends that are not capped by microtubule-nucleating proteins or other factors and protects microtubule minus-ends from depolymerization. In contrast to CAMSAP2 and CAMSAP3, tracks along the growing tips of minus-end microtubules without significantly affecting the polymerization rate: binds at the very tip of the microtubules minus-end and acts as a minus-end tracking protein (-TIP) that dissociates from microtubules after allowing tubulin incorporation. Through interaction with spectrin may regulate neurite outgrowth. This is Calmodulin-regulated spectrin-associated protein 1 (CAMSAP1) from Homo sapiens (Human).